The sequence spans 113 residues: uncharacterized protein (113 aa).

This is an uncharacterized protein from Escherichia coli O6:H1 (strain CFT073 / ATCC 700928 / UPEC).